Here is a 183-residue protein sequence, read N- to C-terminus: Large ribosomal subunit protein uL5 (183 aa).

The protein belongs to the universal ribosomal protein uL5 family. As to quaternary structure, part of the 50S ribosomal subunit; part of the 5S rRNA/L5/L18/L25 subcomplex. Contacts the 5S rRNA and the P site tRNA. Forms a bridge to the 30S subunit in the 70S ribosome.

This is one of the proteins that bind and probably mediate the attachment of the 5S RNA into the large ribosomal subunit, where it forms part of the central protuberance. In the 70S ribosome it contacts protein S13 of the 30S subunit (bridge B1b), connecting the 2 subunits; this bridge is implicated in subunit movement. Contacts the P site tRNA; the 5S rRNA and some of its associated proteins might help stabilize positioning of ribosome-bound tRNAs. In Leptospira biflexa serovar Patoc (strain Patoc 1 / Ames), this protein is Large ribosomal subunit protein uL5.